Consider the following 370-residue polypeptide: Cytochrome b (370 aa).

The next 4 helical transmembrane spans lie at 25-45 (FGSM…FLAV), 69-90 (WMMQ…YIHI), 105-125 (WFSG…GYVL), and 170-190 (FFAL…LHIL). The heme b site is built by His-75 and His-89. His-174 and His-188 together coordinate heme b. His-193 contacts a ubiquinone. 4 helical membrane passes run 218 to 238 (YKDM…VSFF), 280 to 300 (LGGA…PFTH), 312 to 332 (FMQL…WTAT), and 339 to 358 (FTTI…ISNP).

The protein belongs to the cytochrome b family. As to quaternary structure, the cytochrome bc1 complex contains 3 respiratory subunits (MT-CYB, CYC1 and UQCRFS1), 2 core proteins (UQCRC1 and UQCRC2) and probably 6 low-molecular weight proteins. Heme b is required as a cofactor.

Its subcellular location is the mitochondrion inner membrane. Component of the ubiquinol-cytochrome c reductase complex (complex III or cytochrome b-c1 complex) that is part of the mitochondrial respiratory chain. The b-c1 complex mediates electron transfer from ubiquinol to cytochrome c. Contributes to the generation of a proton gradient across the mitochondrial membrane that is then used for ATP synthesis. The chain is Cytochrome b (MT-CYB) from Chilabothrus strigilatus mccraniei (Ragged Island boa constrictor).